Consider the following 445-residue polypeptide: UDP-N-acetylglucosamine--peptide N-acetylglucosaminyltransferase stabilizing protein GtfB (445 aa).

Positions 55-171 are glycosyltransferase 1; it reads KPLYFNQVPV…TLPGQSMRYF (117 aa).

It belongs to the GtfB family. Interacts with glycosyltransferase GtfA; probably forms a heterotetramer with 2 subunits each of GtfA and GtfB. Part of the accessory SecA2/SecY2 protein translocation apparatus.

The protein localises to the cell membrane. It functions in the pathway protein modification; protein glycosylation. Required for the polymorphic O-glycosylation of the serine-rich repeat protein PsrP. A stabilizing protein that is part of the accessory SecA2/SecY2 system specifically required to export serine-rich repeat cell wall proteins encoded upstream in the same operon. The GtfA-GtfB complex adds GlcNAc from UDP-GlcNAc to PsrP, attaching the first sugar residue. Stabilizes the glycosylation activity of GtfA. Has no N-acetylglucosaminyl transferase activity on its own. This Streptococcus pneumoniae serotype 4 (strain ATCC BAA-334 / TIGR4) protein is UDP-N-acetylglucosamine--peptide N-acetylglucosaminyltransferase stabilizing protein GtfB.